The primary structure comprises 197 residues: dITP/XTP pyrophosphatase (197 aa).

8 to 13 (TGNPGK) contacts substrate. E40 and D69 together coordinate Mg(2+). D69 acts as the Proton acceptor in catalysis. Substrate-binding positions include S70, 154–157 (FGYD), K177, and 182–183 (HR).

The protein belongs to the HAM1 NTPase family. As to quaternary structure, homodimer. It depends on Mg(2+) as a cofactor.

It carries out the reaction XTP + H2O = XMP + diphosphate + H(+). It catalyses the reaction dITP + H2O = dIMP + diphosphate + H(+). The enzyme catalyses ITP + H2O = IMP + diphosphate + H(+). In terms of biological role, pyrophosphatase that catalyzes the hydrolysis of nucleoside triphosphates to their monophosphate derivatives, with a high preference for the non-canonical purine nucleotides XTP (xanthosine triphosphate), dITP (deoxyinosine triphosphate) and ITP. Seems to function as a house-cleaning enzyme that removes non-canonical purine nucleotides from the nucleotide pool, thus preventing their incorporation into DNA/RNA and avoiding chromosomal lesions. This chain is dITP/XTP pyrophosphatase, found in Photorhabdus laumondii subsp. laumondii (strain DSM 15139 / CIP 105565 / TT01) (Photorhabdus luminescens subsp. laumondii).